A 393-amino-acid polypeptide reads, in one-letter code: Protein Njmu-R1 (393 aa).

The interval 1 to 74 (MLPSLQESLD…AETPSGDDFS (74 aa)) is disordered. 2 positions are modified to phosphoserine: Ser-8 and Ser-18. The segment covering 9 to 24 (LDGDEKELESSEEGGS) has biased composition (acidic residues).

In terms of assembly, interacts with TBC1D23; this interaction may be indirect.

Functionally, may have a role in spermatogenesis. The protein is Protein Njmu-R1 of Mus musculus (Mouse).